The chain runs to 299 residues: MANFPASLLILNGKSADNQPLREAITLLRDEGIQIHVRVTWEKGDAQRYVDEARRLGVETVIAGGGDGTINEVSTALIQIRDGVAPALGLLPLGTANDFATSAGIPEALDKALKLAIAGNAMEIDMAMVNDKTCFINMATGGFGTRITTETPEKLKAALGGVSYLIHGLMRMDTLTPDRCEIRGENFHWQGDALVIGIGNGRQAGGGQQLCPTALINDGLLQLRIFTGEELLPALFSTLTQSDDNPNIIDGASAWFDIHAPHEITFNLDGEPLSGQEFHIEVLPGALRCRLPPDCPLLR.

The DAGKc domain occupies 2-133 (ANFPASLLIL…IDMAMVNDKT (132 aa)). ATP is bound by residues threonine 40, 66–72 (GDGTINE), and threonine 95. Residues leucine 215, aspartate 218, and leucine 220 each contribute to the Mg(2+) site. Glutamate 271 (proton acceptor) is an active-site residue.

Belongs to the diacylglycerol/lipid kinase family. YegS lipid kinase subfamily. Requires Mg(2+) as cofactor. It depends on Ca(2+) as a cofactor.

Its subcellular location is the cytoplasm. In terms of biological role, probably phosphorylates lipids; the in vivo substrate is unknown. The polypeptide is Probable lipid kinase YegS (Salmonella choleraesuis (strain SC-B67)).